The sequence spans 191 residues: Threonylcarbamoyl-AMP synthase (191 aa).

The YrdC-like domain occupies 7 to 191 (QSELNDALKI…FHASTGKRLR (185 aa)).

Belongs to the SUA5 family. TsaC subfamily.

Its subcellular location is the cytoplasm. It catalyses the reaction L-threonine + hydrogencarbonate + ATP = L-threonylcarbamoyladenylate + diphosphate + H2O. Required for the formation of a threonylcarbamoyl group on adenosine at position 37 (t(6)A37) in tRNAs that read codons beginning with adenine. Catalyzes the conversion of L-threonine, HCO(3)(-)/CO(2) and ATP to give threonylcarbamoyl-AMP (TC-AMP) as the acyladenylate intermediate, with the release of diphosphate. This chain is Threonylcarbamoyl-AMP synthase, found in Psychromonas ingrahamii (strain DSM 17664 / CCUG 51855 / 37).